The sequence spans 314 residues: 4-hydroxy-3-methylbut-2-enyl diphosphate reductase (314 aa).

Residue Cys-12 coordinates [4Fe-4S] cluster. (2E)-4-hydroxy-3-methylbut-2-enyl diphosphate contacts are provided by His-41 and His-74. Positions 41 and 74 each coordinate dimethylallyl diphosphate. Positions 41 and 74 each coordinate isopentenyl diphosphate. Cys-96 is a [4Fe-4S] cluster binding site. A (2E)-4-hydroxy-3-methylbut-2-enyl diphosphate-binding site is contributed by His-124. His-124 contributes to the dimethylallyl diphosphate binding site. His-124 contributes to the isopentenyl diphosphate binding site. Residue Glu-126 is the Proton donor of the active site. Residue Thr-167 coordinates (2E)-4-hydroxy-3-methylbut-2-enyl diphosphate. Residue Cys-197 participates in [4Fe-4S] cluster binding. Positions 225, 226, 227, and 269 each coordinate (2E)-4-hydroxy-3-methylbut-2-enyl diphosphate. The dimethylallyl diphosphate site is built by Ser-225, Ser-226, Asn-227, and Ser-269. 4 residues coordinate isopentenyl diphosphate: Ser-225, Ser-226, Asn-227, and Ser-269.

The protein belongs to the IspH family. It depends on [4Fe-4S] cluster as a cofactor.

It catalyses the reaction isopentenyl diphosphate + 2 oxidized [2Fe-2S]-[ferredoxin] + H2O = (2E)-4-hydroxy-3-methylbut-2-enyl diphosphate + 2 reduced [2Fe-2S]-[ferredoxin] + 2 H(+). It carries out the reaction dimethylallyl diphosphate + 2 oxidized [2Fe-2S]-[ferredoxin] + H2O = (2E)-4-hydroxy-3-methylbut-2-enyl diphosphate + 2 reduced [2Fe-2S]-[ferredoxin] + 2 H(+). It participates in isoprenoid biosynthesis; dimethylallyl diphosphate biosynthesis; dimethylallyl diphosphate from (2E)-4-hydroxy-3-methylbutenyl diphosphate: step 1/1. It functions in the pathway isoprenoid biosynthesis; isopentenyl diphosphate biosynthesis via DXP pathway; isopentenyl diphosphate from 1-deoxy-D-xylulose 5-phosphate: step 6/6. In terms of biological role, catalyzes the conversion of 1-hydroxy-2-methyl-2-(E)-butenyl 4-diphosphate (HMBPP) into a mixture of isopentenyl diphosphate (IPP) and dimethylallyl diphosphate (DMAPP). Acts in the terminal step of the DOXP/MEP pathway for isoprenoid precursor biosynthesis. This is 4-hydroxy-3-methylbut-2-enyl diphosphate reductase from Mannheimia succiniciproducens (strain KCTC 0769BP / MBEL55E).